Consider the following 151-residue polypeptide: Austinoid biosynthesis clusters protein F (151 aa).

The protein belongs to the trt14 isomerase family. In terms of assembly, homodimer.

Its pathway is secondary metabolite biosynthesis; terpenoid biosynthesis. Part of the gene cluster B that mediates the biosynthesis of the fungal meroterpenoid acetoxydehydroaustin. The first step of the pathway is the synthesis of 3,5-dimethylorsellinic acid by the polyketide synthase ausA. 3,5-dimethylorsellinic acid is then prenylated by the polyprenyl transferase ausN. Further epoxidation by the FAD-dependent monooxygenase ausM and cyclization by the probable terpene cyclase ausL lead to the formation of protoaustinoid A. Protoaustinoid A is then oxidized to spiro-lactone preaustinoid A3 by the combined action of the FAD-binding monooxygenases ausB and ausC, and the dioxygenase ausE. Acid-catalyzed keto-rearrangement and ring contraction of the tetraketide portion of preaustinoid A3 by ausJ lead to the formation of preaustinoid A4. The aldo-keto reductase ausK, with the help of ausH, is involved in the next step by transforming preaustinoid A4 into isoaustinone which is in turn hydroxylated by the P450 monooxygenase ausI to form austinolide. The cytochrome P450 monooxygenase ausG then modifies austinolide to austinol. Austinol is further acetylated to austin by the O-acetyltransferase ausP, which spontaneously changes to dehydroaustin. The cytochrome P450 monooxygenase then converts dehydroaustin is into 7-dehydrodehydroaustin. The hydroxylation catalyzed by ausR permits the second O-acetyltransferase ausQ to add an additional acetyl group to the molecule, leading to the formation of acetoxydehydroaustin. Due to genetic rearrangements of the clusters and the subsequent loss of some enzymes, the end product of the Penicillium brasilianum austinoid biosynthesis clusters is acetoxydehydroaustin. The chain is Austinoid biosynthesis clusters protein F from Penicillium brasilianum.